The chain runs to 112 residues: UPF0060 membrane protein CMS0846 (112 aa).

Transmembrane regions (helical) follow at residues 6 to 26, 32 to 52, 61 to 81, and 87 to 107; these read VILF…IWQA, PFWW…IATL, ILAA…TVVD, and RWDV…MAAP.

It belongs to the UPF0060 family.

The protein localises to the cell membrane. The sequence is that of UPF0060 membrane protein CMS0846 from Clavibacter sepedonicus (Clavibacter michiganensis subsp. sepedonicus).